We begin with the raw amino-acid sequence, 314 residues long: Acetaldehyde dehydrogenase 1/2 (314 aa).

Residue 12–15 (SGNI) coordinates NAD(+). The active-site Acyl-thioester intermediate is the cysteine 130. Residues 161–169 (SAGPGTRAN) and asparagine 288 contribute to the NAD(+) site.

The protein belongs to the acetaldehyde dehydrogenase family.

It catalyses the reaction acetaldehyde + NAD(+) + CoA = acetyl-CoA + NADH + H(+). The polypeptide is Acetaldehyde dehydrogenase 1/2 (Rhizorhabdus wittichii (strain DSM 6014 / CCUG 31198 / JCM 15750 / NBRC 105917 / EY 4224 / RW1) (Sphingomonas wittichii)).